Consider the following 214-residue polypeptide: Metalloproteinase inhibitor 3 (214 aa).

A signal peptide spans 1 to 26; it reads MSVCALTLILGCFLLFLGDISKPAEG. Position 27 (C27) interacts with Zn(2+). Involved in metalloproteinase-binding regions lie at residues 27 to 30 and 91 to 92; these read CTCA and ES. 6 disulfide bridges follow: C27–C94, C29–C121, C39–C146, C148–C195, C153–C158, and C166–C187. Positions 27 to 146 constitute an NTR domain; that stretch reads CTCAPSHPQD…GLNHRYPLGC (120 aa).

The protein belongs to the protease inhibitor I35 (TIMP) family.

The protein resides in the secreted. Its subcellular location is the extracellular space. The protein localises to the extracellular matrix. Its function is as follows. Complexes with metalloproteinases (such as collagenases) and irreversibly inactivates them by binding to their catalytic zinc cofactor. May form part of a tissue-specific acute response to remodeling stimuli. The polypeptide is Metalloproteinase inhibitor 3 (timp3) (Xenopus laevis (African clawed frog)).